A 241-amino-acid chain; its full sequence is tRNA pseudouridine synthase A (241 aa).

The Nucleophile role is filled by aspartate 51. Tyrosine 110 provides a ligand contact to substrate.

Belongs to the tRNA pseudouridine synthase TruA family. In terms of assembly, homodimer.

The enzyme catalyses uridine(38/39/40) in tRNA = pseudouridine(38/39/40) in tRNA. Formation of pseudouridine at positions 38, 39 and 40 in the anticodon stem and loop of transfer RNAs. The sequence is that of tRNA pseudouridine synthase A from Campylobacter jejuni subsp. doylei (strain ATCC BAA-1458 / RM4099 / 269.97).